A 351-amino-acid chain; its full sequence is MLTREKAIEFLNSNDTGPILEMLNLINGTNNGKNITYSKNAFIPVCNWCRNICGYCTFRAENFKIMTKNEVKEILLKADSLGCREALFTFGENVDENELVREKLIKMGYKNILEYLYDLCDWCLSNTNILPHTNCGILNYDELKYLRKVNVSMGLMLENSSERLCKTVAHEKSPGKNPKLRIEMIENAGKLKIPFTTGILIGIGETFEERINSIFEIKRMHEKYGHIQEVIIQNFRVKKGIPMENFIEPSPIEMFKMVMISKLILEDISIQVPPNLNRETGQLFLMGGIDDFGGVSPLTKDYVNPEAPWPDILELERFSNELGFKLKERLPIYEKYINENWIDSEILKKLI.

Positions 35–275 constitute a Radical SAM core domain; that stretch reads ITYSKNAFIP…EDISIQVPPN (241 aa). [4Fe-4S] cluster contacts are provided by C49, C53, and C56.

It belongs to the radical SAM superfamily. CofG family. As to quaternary structure, consists of two subunits, CofG and CofH. It depends on [4Fe-4S] cluster as a cofactor.

The enzyme catalyses 5-amino-5-(4-hydroxybenzyl)-6-(D-ribitylimino)-5,6-dihydrouracil + S-adenosyl-L-methionine = 7,8-didemethyl-8-hydroxy-5-deazariboflavin + 5'-deoxyadenosine + L-methionine + NH4(+) + H(+). Its pathway is cofactor biosynthesis; coenzyme F0 biosynthesis. Functionally, catalyzes the radical-mediated synthesis of 7,8-didemethyl-8-hydroxy-5-deazariboflavin from 5-amino-5-(4-hydroxybenzyl)-6-(D-ribitylimino)-5,6-dihydrouracil. In Methanococcus vannielii (strain ATCC 35089 / DSM 1224 / JCM 13029 / OCM 148 / SB), this protein is 7,8-didemethyl-8-hydroxy-5-deazariboflavin synthase.